The chain runs to 227 residues: MSKAVVVFSGGQDSTTCLIQALQHFDEVHGITFDYGQRHREEIEIAKTLASKLKLASHKVMDVTLLNELAISALTRDSIPVSNDLMDNGLPNTFVPGRNILFLTLAGIYAYQLGADVVITGVCETDFSGYPDCRNDFVKAMQAALEQGMDKKLTIQTPLMWLDKAETWALADKYQSLDLIRDETLTCYNGIKGDGCGTCPACLLRKRGLEEYLADKEAIQARLTAKC.

Position 8-18 (8-18 (FSGGQDSTTCL)) interacts with ATP. Residues cysteine 187, cysteine 196, cysteine 199, and cysteine 202 each contribute to the Zn(2+) site.

This sequence belongs to the QueC family. Zn(2+) is required as a cofactor.

The catalysed reaction is 7-carboxy-7-deazaguanine + NH4(+) + ATP = 7-cyano-7-deazaguanine + ADP + phosphate + H2O + H(+). It functions in the pathway purine metabolism; 7-cyano-7-deazaguanine biosynthesis. In terms of biological role, catalyzes the ATP-dependent conversion of 7-carboxy-7-deazaguanine (CDG) to 7-cyano-7-deazaguanine (preQ(0)). This is 7-cyano-7-deazaguanine synthase from Shewanella pealeana (strain ATCC 700345 / ANG-SQ1).